A 377-amino-acid polypeptide reads, in one-letter code: Chaperone protein DnaJ (377 aa).

One can recognise a J domain in the interval 5-70; the sequence is DYYQVLGVSR…KKRSAYDQLG (66 aa). The segment at 138-216 adopts a CR-type zinc-finger fold; it reads GVTKIISFKT…CYGEGRYINT (79 aa). 8 residues coordinate Zn(2+): C151, C154, C168, C171, C190, C193, C204, and C207. CXXCXGXG motif repeat units lie at residues 151-158, 168-175, 190-197, and 204-211; these read CDACAGKG, CPTCRGSG, CQTCRGAG, and CTKCYGEG.

Belongs to the DnaJ family. Homodimer. Zn(2+) is required as a cofactor.

It localises to the cytoplasm. Its function is as follows. Participates actively in the response to hyperosmotic and heat shock by preventing the aggregation of stress-denatured proteins and by disaggregating proteins, also in an autonomous, DnaK-independent fashion. Unfolded proteins bind initially to DnaJ; upon interaction with the DnaJ-bound protein, DnaK hydrolyzes its bound ATP, resulting in the formation of a stable complex. GrpE releases ADP from DnaK; ATP binding to DnaK triggers the release of the substrate protein, thus completing the reaction cycle. Several rounds of ATP-dependent interactions between DnaJ, DnaK and GrpE are required for fully efficient folding. Also involved, together with DnaK and GrpE, in the DNA replication of plasmids through activation of initiation proteins. This Orientia tsutsugamushi (strain Boryong) (Rickettsia tsutsugamushi) protein is Chaperone protein DnaJ.